Here is a 1123-residue protein sequence, read N- to C-terminus: Adenylyl cyclase X E (1123 aa).

Over 1 to 47 the chain is Cytoplasmic; the sequence is MPRSLGNCQLNYSKERMWEPGYLKAKCAELRLESEFRLYRIRLWKSY. The helical transmembrane segment at 48-68 threads the bilayer; the sequence is LLTFFMLHIFVTSVHCALLLA. Residues 69 to 73 are Extracellular-facing; the sequence is TIERR. The helical transmembrane segment at 74-94 threads the bilayer; the sequence is SIIYFDVALSIGCALVLILVL. Residues 95 to 106 are Cytoplasmic-facing; that stretch reads SVNFCDEFIAKH. Residues 107-127 form a helical membrane-spanning segment; sequence TWYMYASSIFASLTLVFADLT. The Extracellular portion of the chain corresponds to 128-137; that stretch reads ESIYHTYAHS. A helical transmembrane segment spans residues 138 to 158; that stretch reads WILGTFYDTYIIYMIYMFLPI. Residues 159-163 lie on the Cytoplasmic side of the membrane; it reads HFISG. The chain crosses the membrane as a helical span at residues 164–184; sequence AVLLALLVSGLYILYFVIFIA. At 185–196 the chain is on the extracellular side; that stretch reads QGFAQFASALFS. Residues 197-217 traverse the membrane as a helical segment; it reads VGGMSVDIVHYLCLNLVGIFY. The Cytoplasmic portion of the chain corresponds to 218–581; that stretch reads RVMNDTVVRS…YLKQTDYMYK (364 aa). Residues 346 to 348 and Arg-392 each bind ATP; that span reads LGD. Residue Asp-348 participates in Mg(2+) binding. A helical transmembrane segment spans residues 582-602; the sequence is YSIILSASVGCSLVYIELMDT. Over 603-608 the chain is Extracellular; that stretch reads QMICSS. The chain crosses the membrane as a helical span at residues 609–629; that stretch reads CFVLPASVATIQCILALIAWY. The Cytoplasmic portion of the chain corresponds to 630-667; it reads KKYCWTRYGRNNVPHHYNGFSCFIFRIHDKILNSLPIR. Residues 668–688 traverse the membrane as a helical segment; it reads ICIYLFLMISSFFVMCLIVMS. The Extracellular portion of the chain corresponds to 689–719; that stretch reads CQREEFEMAYIEERLFHYEQEAHICFHPWVT. Residues 720-740 traverse the membrane as a helical segment; it reads TNMLSLMICLTFTFAHIPIMV. Residues 741 to 743 lie on the Cytoplasmic side of the membrane; the sequence is KTA. Residues 744 to 764 traverse the membrane as a helical segment; the sequence is VAILETLAYLLLIFFQFDFVF. Over 765–772 the chain is Extracellular; sequence HHSVTTNP. Residues 773 to 793 traverse the membrane as a helical segment; the sequence is YFKSEYAHALLICITFLIMFV. Residues 794–1123 are Cytoplasmic-facing; that stretch reads KERQIEFTNK…STSRHTLQSL (330 aa). ATP-binding positions include Lys-903, 1014-1016, 1021-1025, and Lys-1061; these read DIW and NMASR.

Belongs to the adenylyl cyclase class-4/guanylyl cyclase family. As to expression, expressed in labella.

The protein localises to the membrane. It carries out the reaction ATP = 3',5'-cyclic AMP + diphosphate. Functionally, catalyzes the formation of the signaling molecule cAMP in response to G-protein signaling. The sequence is that of Adenylyl cyclase X E from Drosophila melanogaster (Fruit fly).